Reading from the N-terminus, the 364-residue chain is UDP-N-acetylglucosamine--N-acetylmuramyl-(pentapeptide) pyrophosphoryl-undecaprenol N-acetylglucosamine transferase (364 aa).

UDP-N-acetyl-alpha-D-glucosamine-binding positions include 13 to 15 (TGG), asparagine 125, arginine 165, serine 192, and glutamine 293.

It belongs to the glycosyltransferase 28 family. MurG subfamily.

Its subcellular location is the cell inner membrane. The catalysed reaction is di-trans,octa-cis-undecaprenyl diphospho-N-acetyl-alpha-D-muramoyl-L-alanyl-D-glutamyl-meso-2,6-diaminopimeloyl-D-alanyl-D-alanine + UDP-N-acetyl-alpha-D-glucosamine = di-trans,octa-cis-undecaprenyl diphospho-[N-acetyl-alpha-D-glucosaminyl-(1-&gt;4)]-N-acetyl-alpha-D-muramoyl-L-alanyl-D-glutamyl-meso-2,6-diaminopimeloyl-D-alanyl-D-alanine + UDP + H(+). It participates in cell wall biogenesis; peptidoglycan biosynthesis. In terms of biological role, cell wall formation. Catalyzes the transfer of a GlcNAc subunit on undecaprenyl-pyrophosphoryl-MurNAc-pentapeptide (lipid intermediate I) to form undecaprenyl-pyrophosphoryl-MurNAc-(pentapeptide)GlcNAc (lipid intermediate II). This Cereibacter sphaeroides (strain ATCC 17029 / ATH 2.4.9) (Rhodobacter sphaeroides) protein is UDP-N-acetylglucosamine--N-acetylmuramyl-(pentapeptide) pyrophosphoryl-undecaprenol N-acetylglucosamine transferase.